A 232-amino-acid polypeptide reads, in one-letter code: Small ribosomal subunit protein uS3 (232 aa).

A KH type-2 domain is found at valine 39–arginine 107.

This sequence belongs to the universal ribosomal protein uS3 family. In terms of assembly, part of the 30S ribosomal subunit. Forms a tight complex with proteins S10 and S14.

Functionally, binds the lower part of the 30S subunit head. Binds mRNA in the 70S ribosome, positioning it for translation. The protein is Small ribosomal subunit protein uS3 of Yersinia pestis bv. Antiqua (strain Antiqua).